The chain runs to 663 residues: Polyunsaturated fatty acid lipoxygenase ALOX15 (663 aa).

One can recognise a PLAT domain in the interval 2–115 (GVYRIRVSTG…ILNLPEGTGC (114 aa)). The Lipoxygenase domain maps to 116-663 (TVVEDSQGLF…PSLVENSVAI (548 aa)). 5 residues coordinate Fe cation: H361, H366, H541, H545, and I663.

This sequence belongs to the lipoxygenase family. In terms of assembly, interacts with PEBP1; in response to IL13/interleukin-13, prevents the interaction of PEBP1 with RAF1 to activate the ERK signaling cascade. Fe cation is required as a cofactor. As to expression, found in pituitary and pineal glands as well as leukocytes, kidney, aorta, small intestine and cornea. Also expressed by resident peritoneal macrophages (at protein level).

It localises to the cytoplasm. The protein resides in the cytosol. It is found in the cell membrane. The protein localises to the lipid droplet. It carries out the reaction (5Z,8Z,11Z,14Z)-eicosatetraenoate + O2 = (12S)-hydroperoxy-(5Z,8Z,10E,14Z)-eicosatetraenoate. The enzyme catalyses (5Z,8Z,11Z,14Z)-eicosatetraenoate + O2 = (15S)-hydroperoxy-(5Z,8Z,11Z,13E)-eicosatetraenoate. The catalysed reaction is (9Z,12Z)-octadecadienoate + O2 = (13S)-hydroperoxy-(9Z,11E)-octadecadienoate. It catalyses the reaction (5Z,8Z,11Z,14Z)-eicosatetraenoate + 2 O2 = (14R,15S)-dihydroperoxy-(5Z,8Z,10E,12E)-eicosatetraenoate. It carries out the reaction (5Z,8Z,11Z,14Z)-eicosatetraenoate + 2 O2 = (8S,15S)-dihydroperoxy-(5Z,9E,11Z,13E)-eicosatetraenoate. The enzyme catalyses (14S,15R)-epoxy-(5Z,8Z,11Z)-eicosatrienoate + O2 = (8S)-hydroperoxy-(14S,15R)-epoxy-(5Z,9E,11Z)-eicosatrienoate. The catalysed reaction is (14S,15R)-epoxy-(5Z,8Z,11Z)-eicosatrienoate + O2 = (12S)-hydroperoxy-(14S,15R)-epoxy-(5Z,8Z,10E)-eicosatrienoate. It catalyses the reaction (14R,15S)-epoxy-(5Z,8Z,11Z)-eicosatrienoate + O2 = (5S)-hydroperoxy-(14R,15S)-epoxy-(6E,8Z,11Z)-eicosatrienoate. It carries out the reaction (14R,15S)-epoxy-(5Z,8Z,11Z)-eicosatrienoate + O2 = (12S)-hydroperoxy-(14R,15S)-epoxy-(5Z,8Z,10E)-eicosatrienoate. The enzyme catalyses (15R)-hydroperoxy-(5Z,8Z,11Z,13E)-eicosatetraenoate = 15-oxo-(5Z,8Z,11Z,13E)-eicosatetraenoate + H2O. The catalysed reaction is (15S)-hydroperoxy-(5Z,8Z,11Z,13E)-eicosatetraenoate = (14S,15S)-epoxy-(5Z,8Z,10E,12E)-eicosatetraenoate + H2O. It catalyses the reaction (12S)-hydroperoxy-(5Z,8Z,10E,14Z)-eicosatetraenoate = (8S)-hydroxy-(11S,12S)-epoxy-(5Z,9E,14Z)-eicosatrienoate. It carries out the reaction (4Z,7Z,10Z,13Z,16Z)-docosapentaenoate + O2 = 14-hydroperoxy-(4Z,7Z,10Z,12E,16Z)-docosapentaenoate. The enzyme catalyses (7Z,10Z,13Z,16Z,19Z)-docosapentaenoate + O2 = 14-hydroperoxy-(7Z,10Z,12E,16Z,19Z)-docosapentaenoate. The catalysed reaction is (4Z,7Z,10Z,13Z,16Z,19Z)-docosahexaenoate + O2 = (14S)-hydroperoxy-(4Z,7Z,10Z,12E,16Z,19Z)-docosahexaenoate. It catalyses the reaction (4Z,7Z,10Z,13Z,16Z,19Z)-docosahexaenoate + O2 = (17S)-hydroperoxy-(4Z,7Z,10Z,13Z,15E,19Z)-docosahexaenoate. It carries out the reaction (7S)-hydroperoxy-(4Z,8E,10Z,13Z,16Z,19Z)-docosahexaenoate + O2 = (7S,14S)-dihydroperoxy-(4Z,8E,10Z,12E,16Z,19Z)-docosahexaenoate. The enzyme catalyses (7S)-hydroperoxy-(4Z,8E,10Z,13Z,16Z,19Z)-docosahexaenoate + O2 = (7S,17S)-dihydroperoxy-(4Z,8E,10Z,13Z,15E,19Z)-docosahexaenoate. The catalysed reaction is (4Z,7Z,10Z,13Z,16Z,19Z)-docosahexaenoate + O2 = (11S)-hydroperoxy-(4Z,7Z,9E,13Z,16Z,19Z)-docosahexaenoate. It catalyses the reaction N-(5Z,8Z,11Z,14Z)-eicosatetraenoyl-taurine + O2 = N-(12S)-hydroperoxy-(5Z,8Z,10E,14Z)-eicosatetraenoyl-taurine. It carries out the reaction N-(5Z,8Z,11Z,14Z)-eicosatetraenoyl-gamma-aminobutanoate + O2 = N-(12S)-hydroperoxy-(5Z,8Z,10E,14Z)-eicosatetraenoyl-gamma-aminobutanoate. The enzyme catalyses N-(5Z,8Z,11Z,14Z)-eicosatetraenoyl-glycine + O2 = N-(12S)-hydroperoxy-(5Z,8Z,10E,14Z)-eicosatetraenoyl-glycine. The catalysed reaction is N-(5Z,8Z,11Z,14Z)-eicosatetraenoyl-L-alanine + O2 = N-(12S)-hydroperoxy-(5Z,8Z,10E,14Z)-eicosatetraenoyl-alanine. It catalyses the reaction N-(5Z,8Z,11Z,14Z)-eicosatetraenoyl-taurine + O2 = N-(15S)-hydroperoxy-(5Z,8Z,11Z,13E)-eicosatetraenoyl-taurine. It carries out the reaction N-(5Z,8Z,11Z,14Z)-eicosatetraenoyl-gamma-aminobutanoate + O2 = N-(15S)-hydroperoxy-(5Z,8Z,11Z,13E)-eicosatetraenoyl-gamma-aminobutanoate. The enzyme catalyses N-(5Z,8Z,11Z,14Z)-eicosatetraenoyl-glycine + O2 = N-(15S)-hydroperoxy-(5Z,8Z,11Z,13E)-eicosatetraenoyl-glycine. The catalysed reaction is N-(5Z,8Z,11Z,14Z)-eicosatetraenoyl-L-alanine + O2 = N-(15S)-hydroperoxy-(5Z,8Z,11Z,13E)-eicosatetraenoyl-alanine. Its pathway is lipid metabolism; hydroperoxy eicosatetraenoic acid biosynthesis. In terms of biological role, non-heme iron-containing dioxygenase that catalyzes the stereo-specific peroxidation of free and esterified polyunsaturated fatty acids generating a spectrum of bioactive lipid mediators. It inserts peroxyl groups at C12 or C15 of arachidonate ((5Z,8Z,11Z,14Z)-eicosatetraenoate) producing both 12-hydroperoxyeicosatetraenoate/12-HPETE and 15-hydroperoxyeicosatetraenoate/15-HPETE. It may then act on 12-HPETE to produce hepoxilins, which may show pro-inflammatory properties. Can also peroxidize linoleate ((9Z,12Z)-octadecadienoate) to 13-hydroperoxyoctadecadienoate. May participate in the sequential oxidations of DHA ((4Z,7Z,10Z,13Z,16Z,19Z)-docosahexaenoate) to generate specialized pro-resolving mediators (SPMs)like resolvin D5 ((7S,17S)-diHPDHA) and (7S,14S)-diHPDHA, that actively down-regulate the immune response and have anti-aggregation properties with platelets. Can convert epoxy fatty acids to hydroperoxy-epoxides derivatives followed by an intramolecular nucleophilic substitution leading to the formation of monocyclic endoperoxides. Plays an important role during the maintenance of self-tolerance by peroxidizing membrane-bound phosphatidylethanolamine which can then signal the sorting process for clearance of apoptotic cells during inflammation and prevent an autoimmune response. In addition to its role in the immune and inflammatory responses, this enzyme may play a role in epithelial wound healing in the cornea through production of lipoxin A4 (LXA(4)) and docosahexaenoic acid-derived neuroprotectin D1 (NPD1; 10R,17S-HDHA), both lipid autacoids exhibit anti-inflammatory and neuroprotective properties. Furthermore, it may regulate actin polymerization which is crucial for several biological processes such as the phagocytosis of apoptotic cells. It is also implicated in the generation of endogenous ligands for peroxisome proliferator activated receptor (PPAR-gamma), hence modulating macrophage development and function. It may also exert a negative effect on skeletal development by regulating bone mass through this pathway. As well as participates in ER stress and downstream inflammation in adipocytes, pancreatic islets, and liver. Finally, it is also involved in the cellular response to IL13/interleukin-13. The protein is Polyunsaturated fatty acid lipoxygenase ALOX15 of Mus musculus (Mouse).